Consider the following 697-residue polypeptide: SITS-binding protein (697 aa).

The interval 1 to 20 (MARRAKKMASNSGDSSPEPG) is disordered. Topologically, residues 2-29 (ARRAKKMASNSGDSSPEPGIKEINETWK) are cytoplasmic. Residues 30 to 50 (GAIACLGVALLFLMTIGVLYW) traverse the membrane as a helical segment. N-linked (GlcNAc...) asparagine glycans are attached at residues Asn112, Asn134, Asn162, Asn386, Asn405, and Asn470. The next 2 membrane-spanning stretches (helical) occupy residues 503–521 (GLIP…FFIP) and 542–562 (WMQI…WVFG). The N-linked (GlcNAc...) asparagine glycan is linked to Asn568.

Belongs to the glycosyl hydrolase 31 family. In terms of assembly, homodimer; disulfide-linked. Electroplax tissue, brain (200-fold less), and heart (500-fold less).

It is found in the membrane. Its function is as follows. This glycoprotein is probably not a functional part of the chloride channel. This chain is SITS-binding protein, found in Tetronarce californica (Pacific electric ray).